The following is a 193-amino-acid chain: Transmembrane protein 066L (193 aa).

A run of 2 helical transmembrane segments spans residues 14–34 and 48–68; these read VLFA…GLVW and LVVE…LVVV.

The protein belongs to the IIV-6 357R family.

It is found in the membrane. This Invertebrate iridescent virus 3 (IIV-3) protein is Transmembrane protein 066L.